Here is a 408-residue protein sequence, read N- to C-terminus: Heparan-sulfate 6-O-sulfotransferase 1 (408 aa).

The Cytoplasmic portion of the chain corresponds to 8–14; sequence MVERTSK. Residues 15–35 traverse the membrane as a helical; Signal-anchor for type II membrane protein segment; it reads FLLIVAASVCFMLILYQYVGP. Topologically, residues 36–408 are lumenal; sequence GLSLGAPSGR…DYMSHIIEKW (373 aa). 3'-phosphoadenylyl sulfate is bound at residue 90-98; it reads HIQKTGGTT. Substrate contacts are provided by residues 120–121, Arg-137, Trp-142, and His-147; that span reads KK. His-147 serves as the catalytic Proton acceptor. 3'-phosphoadenylyl sulfate contacts are provided by Arg-182 and Ser-190. Positions 194 and 201 each coordinate substrate. Asn-261 carries an N-linked (GlcNAc...) asparagine glycan. 314–316 provides a ligand contact to 3'-phosphoadenylyl sulfate; that stretch reads MQY. Asn-317 is a glycosylation site (N-linked (GlcNAc...) asparagine). 320–321 is a 3'-phosphoadenylyl sulfate binding site; the sequence is RA. N-linked (GlcNAc...) asparagine glycosylation occurs at Asn-328. Residues 348-382 adopt a coiled-coil conformation; it reads AKDLFQQRYQYKRQLERMEQRIKNREERLLHRSNE. Residues 376-396 are disordered; the sequence is LLHRSNEALPKEETEEQGRLP.

It belongs to the sulfotransferase 6 family. N-glycosylated.

The protein localises to the membrane. The catalysed reaction is alpha-D-glucosaminyl-[heparan sulfate](n) + 3'-phosphoadenylyl sulfate = 6-sulfo-alpha-D-glucosaminyl-[heparan sulfate](n) + adenosine 3',5'-bisphosphate + H(+). Functionally, 6-O-sulfation enzyme which catalyzes the transfer of sulfate from 3'-phosphoadenosine 5'-phosphosulfate (PAPS) to position 6 of the N-sulfoglucosamine residue (GlcNS) of heparan sulfate. May also play a role in limb development. The protein is Heparan-sulfate 6-O-sulfotransferase 1 of Gallus gallus (Chicken).